Consider the following 544-residue polypeptide: Chaperonin GroEL (544 aa).

Residues 30–33 (TLGP), Lys51, 87–91 (DGTTT), Gly415, and Asp495 contribute to the ATP site.

It belongs to the chaperonin (HSP60) family. In terms of assembly, forms a cylinder of 14 subunits composed of two heptameric rings stacked back-to-back. Interacts with the co-chaperonin GroES.

The protein resides in the cytoplasm. The catalysed reaction is ATP + H2O + a folded polypeptide = ADP + phosphate + an unfolded polypeptide.. Together with its co-chaperonin GroES, plays an essential role in assisting protein folding. The GroEL-GroES system forms a nano-cage that allows encapsulation of the non-native substrate proteins and provides a physical environment optimized to promote and accelerate protein folding. This is Chaperonin GroEL from Agrobacterium fabrum (strain C58 / ATCC 33970) (Agrobacterium tumefaciens (strain C58)).